The primary structure comprises 748 residues: Malate synthase G (748 aa).

Acetyl-CoA contacts are provided by residues Val141, 148 to 149, Ser298, and Arg335; that span reads RF. The active-site Proton acceptor is the Arg362. Residues Arg362, Glu453, and 478-481 contribute to the glyoxylate site; that span reads GFLD. Mg(2+) is bound by residues Glu453 and Asp481. Acetyl-CoA is bound at residue Pro562. Cys639 carries the cysteine sulfenic acid (-SOH) modification. Catalysis depends on Asp653, which acts as the Proton donor.

It belongs to the malate synthase family. GlcB subfamily. As to quaternary structure, monomer. The cofactor is Mg(2+).

The protein localises to the cytoplasm. The enzyme catalyses glyoxylate + acetyl-CoA + H2O = (S)-malate + CoA + H(+). The protein operates within carbohydrate metabolism; glyoxylate cycle; (S)-malate from isocitrate: step 2/2. Its function is as follows. Involved in the glycolate utilization. Catalyzes the condensation and subsequent hydrolysis of acetyl-coenzyme A (acetyl-CoA) and glyoxylate to form malate and CoA. The chain is Malate synthase G from Corynebacterium efficiens (strain DSM 44549 / YS-314 / AJ 12310 / JCM 11189 / NBRC 100395).